The primary structure comprises 135 residues: Galectin-1 (135 aa).

N-acetylalanine is present on alanine 2. Positions 4–135 (GLVASNLNLK…DFKIKCVAFE (132 aa)) constitute a Galectin domain. 2 positions are modified to N6-acetyllysine: lysine 13 and lysine 29. At serine 30 the chain carries Phosphoserine. A beta-D-galactoside-binding positions include 45-49 (HFNPR), histidine 53, asparagine 62, and 69-72 (WGAE). Lysine 108 carries the N6-acetyllysine; alternate modification. Lysine 108 is modified (N6-succinyllysine; alternate). Lysine 128 is subject to N6-acetyllysine.

As to quaternary structure, homodimer. Binds LGALS3BP. Interacts with CD2, CD3, CD4, CD6, CD7, CD43, ALCAM and CD45. Interacts with laminin (via poly-N-acetyllactosamine). Interacts with SUSD2. Interacts with cargo receptor TMED10; the interaction mediates the translocation from the cytoplasm into the ERGIC (endoplasmic reticulum-Golgi intermediate compartment) and thereby secretion.

It is found in the secreted. The protein resides in the extracellular space. It localises to the extracellular matrix. Its subcellular location is the cytoplasm. Its function is as follows. Lectin that binds beta-galactoside and a wide array of complex carbohydrates. Plays a role in regulating apoptosis, cell proliferation and cell differentiation. Inhibits CD45 protein phosphatase activity and therefore the dephosphorylation of Lyn kinase. Strong inducer of T-cell apoptosis. Has hemagglutinating activity towards human erythrocytes. This chain is Galectin-1, found in Capra hircus (Goat).